A 225-amino-acid polypeptide reads, in one-letter code: MSKRYFVTGTDTEVGKTVASCALLQAAKAAGYRTAGYKPVASGSEKTPEGLRNSDALALQRNSSLQLDYATVNPYTFAEPTSPHIISAQEGRSIESSVMSSGLRALEQQADWVLVEGAGGWFTPLSDTFTFADWVTQEQLPVILVVGVKLGCINHAMLTAQAIQHAGLTLAGWVANDVTPPGKRHAEYMTTLTRMIPAPLLGESPWLAENPENAATGKYINLALL.

An ATP-binding site is contributed by 13–18; it reads EVGKTV. Thr17 contacts Mg(2+). The active site involves Lys38. Residue Ser42 coordinates substrate. Residues Asp55, 116-119, 176-177, 205-207, and Glu212 each bind ATP; these read EGAG, ND, and PWL. Residues Asp55 and Glu116 each coordinate Mg(2+).

The protein belongs to the dethiobiotin synthetase family. Homodimer. Mg(2+) is required as a cofactor.

The protein resides in the cytoplasm. It carries out the reaction (7R,8S)-7,8-diammoniononanoate + CO2 + ATP = (4R,5S)-dethiobiotin + ADP + phosphate + 3 H(+). The protein operates within cofactor biosynthesis; biotin biosynthesis; biotin from 7,8-diaminononanoate: step 1/2. Its function is as follows. Catalyzes a mechanistically unusual reaction, the ATP-dependent insertion of CO2 between the N7 and N8 nitrogen atoms of 7,8-diaminopelargonic acid (DAPA, also called 7,8-diammoniononanoate) to form a ureido ring. The polypeptide is ATP-dependent dethiobiotin synthetase BioD 1 (Escherichia coli O157:H7).